A 982-amino-acid polypeptide reads, in one-letter code: Nitrate reductase [NADPH] (982 aa).

The segment at 1–128 (MEAPALEQRQ…PPSTRLTTIL (128 aa)) is disordered. The segment covering 10-20 (QSLHDSSERQQ) has biased composition (basic and acidic residues). The span at 63–110 (TASPTTTDFSSSSSDDNSTTLETSVNYSHSSNTNTNTSCPPSPITSSS) shows a compositional bias: low complexity. Cys240 contributes to the Mo-molybdopterin binding site. Positions 617-692 (TRLITLEELR…MPTYHIGTLT (76 aa)) constitute a Cytochrome b5 heme-binding domain. Residues His652 and His675 each contribute to the heme site. The FAD-binding FR-type domain occupies 721-836 (KTWNSAILTF…KGPVGKFVYQ (116 aa)). FAD is bound by residues 776-779 (RAYT), 794-798 (LVKIY), 810-812 (QMT), Ser860, and Thr863. An NADP(+)-binding site is contributed by 952-961 (MVLLCGPEGM).

The protein belongs to the nitrate reductase family. Homodimer. The cofactor is FAD. Requires heme as cofactor. It depends on Mo-molybdopterin as a cofactor.

The catalysed reaction is nitrite + NADP(+) + H2O = nitrate + NADPH + H(+). It participates in nitrogen metabolism; nitrate reduction (assimilation). Nitrate reductase is a key enzyme involved in the first step of nitrate assimilation in plants, fungi and bacteria. The protein is Nitrate reductase [NADPH] (nit-3) of Neurospora crassa (strain ATCC 24698 / 74-OR23-1A / CBS 708.71 / DSM 1257 / FGSC 987).